Consider the following 689-residue polypeptide: MADNLVIVESPAKAKTIEKYLGKRYKVIASMGHVRDLPRSQMGVDTEDNYEPKYITIRGKGPVVKDLKKHAKKAKKIFLASDPDREGEAIAWHLSKILELEDSKENRVVFNEITKDAVKDSFKHPRGIEMDLVDAQQARRILDRLVGYNISPVLWKKVKKGLSAGRVQSVALRLVIDRENEIRNFKPEEYWSIEGEFRYKKSKFTAKFLHYKNKPYKLNNKDDVQRITEALNGDQFEITNVNRKEKTRYPAHPFTTSTLQQEAARKLNFKARKTMMLAQQLYEGIDLKRQGTVGLITYMRTDSTRISTSAKSEAQQYINDKYGEQYVSQRKSSGKQGDQDAHEAIRPTSTMRTPDDMKAFLTRDQHRLYKLIWERFVASQMAPAILDTVALDVTQNDIKFRANGQTIKFKGFMTLYVEAKDDKENDKENKLPQLDKGDKVTATKIEPAQHFTQPPPRYTEARLVKTLEELKIGRPSTYAPTIDTIQKRNYVKLESKRFIPTELGEIVYEQVKEYFPEIIDVEFTVNMETLLDKIAEGDMNWRKVIGDFYNSFKQDVERAESEMEKIEIKDEPAGEDCEVCGSPMVIKMGRYGKFMACSNFPDCRNTKAIVKTIGVTCPKCNEGDVVERKSKKNRIFYGCSRYPECDFISWDKPVGRDCPKCHHYLVNKKKGKSSQVVCSNCDYEEEVQK.

Residues 3–113 (DNLVIVESPA…KENRVVFNEI (111 aa)) enclose the Toprim domain. Mg(2+) is bound by residues Glu9 and Asp82. The Topo IA-type catalytic domain maps to 129 to 557 (EMDLVDAQQA…FYNSFKQDVE (429 aa)). The segment at 163-168 (SAGRVQ) is interaction with DNA. The active-site O-(5'-phospho-DNA)-tyrosine intermediate is the Tyr298. C4-type zinc fingers lie at residues 577–603 (CEVC…FPDC), 617–645 (CPKC…YPEC), and 658–681 (CPKC…CSNC).

Belongs to the type IA topoisomerase family. In terms of assembly, monomer. The cofactor is Mg(2+).

The enzyme catalyses ATP-independent breakage of single-stranded DNA, followed by passage and rejoining.. In terms of biological role, releases the supercoiling and torsional tension of DNA, which is introduced during the DNA replication and transcription, by transiently cleaving and rejoining one strand of the DNA duplex. Introduces a single-strand break via transesterification at a target site in duplex DNA. The scissile phosphodiester is attacked by the catalytic tyrosine of the enzyme, resulting in the formation of a DNA-(5'-phosphotyrosyl)-enzyme intermediate and the expulsion of a 3'-OH DNA strand. The free DNA strand then undergoes passage around the unbroken strand, thus removing DNA supercoils. Finally, in the religation step, the DNA 3'-OH attacks the covalent intermediate to expel the active-site tyrosine and restore the DNA phosphodiester backbone. The sequence is that of DNA topoisomerase 1 from Staphylococcus epidermidis (strain ATCC 35984 / DSM 28319 / BCRC 17069 / CCUG 31568 / BM 3577 / RP62A).